Reading from the N-terminus, the 305-residue chain is Aquaporin-1 (305 aa).

The disordered stretch occupies residues 1 to 34 (MSSNDSNDTDKQHTRLDPTGVDDAYIPPEQPETK). Residues 1–48 (MSSNDSNDTDKQHTRLDPTGVDDAYIPPEQPETKHHRFKISRDTLRDH) lie on the Cytoplasmic side of the membrane. A helical membrane pass occupies residues 49–69 (FIAAVGEFCGTFMFLWCAYVI). Topologically, residues 70–91 (CNVANHDVALVAAPDGSHPGQL) are extracellular. Residues 92–112 (IMIAIGFGFSVMFSIWCFAGV) form a helical membrane-spanning segment. The Cytoplasmic segment spans residues 113-136 (SGGALNPAMSLSLCLARAVSPTRC). Positions 118-120 (NPA) match the NPA 1 motif. Residues 137-157 (VVMWVSQIVAGMAAGGAASAM) form a helical membrane-spanning segment. At 158-176 (TPGEVLFANSLGLGCSRTR) the chain is on the extracellular side. The helical transmembrane segment at 177–197 (GLFLEMFGTAILCLTVLMTAV) threads the bilayer. The Cytoplasmic portion of the chain corresponds to 198–203 (EKRETN). A helical membrane pass occupies residues 204 to 224 (FMAALPIGISLFIAHVALTAY). At 225-248 (TGTGVNPARSLGAAVAARYFPHYH) the chain is on the extracellular side. Positions 230-232 (NPA) match the NPA 2 motif. A helical transmembrane segment spans residues 249 to 269 (WIYWIGTLLGSILAWSVWQLL). Residues 270-305 (QILDYTTYVTAEKAASTKEKAQKKGETSSSSAVAEV) lie on the Cytoplasmic side of the membrane. Residues 286–295 (TKEKAQKKGE) show a composition bias toward basic and acidic residues. A disordered region spans residues 286–305 (TKEKAQKKGETSSSSAVAEV). Positions 296–305 (TSSSSAVAEV) are enriched in polar residues.

This sequence belongs to the MIP/aquaporin (TC 1.A.8) family.

The protein resides in the endoplasmic reticulum membrane. Its subcellular location is the cell membrane. In terms of biological role, water channel required to facilitate the transport of water across membranes. Involved in sporulation, freeze tolerance and osmotolerance. Is non-functional in most laboratory strains. The sequence is that of Aquaporin-1 (AQY1) from Saccharomyces cerevisiae (strain ATCC 204508 / S288c) (Baker's yeast).